The chain runs to 565 residues: MSGRSKRESRGSTRGKRESESRGSSGRVKRERDREREPEAASSRGSPVRVKREFEPASAREAPASVVPFVRVKREREVDEDSEPEREVRAKNGRVDSEDRRSRHCPYLDTINRSVLDFDFEKLCSISPSHVNAYACLVCGKYFQGRGLKSHAYIHSVQFSHHVFLNLHTLKFYCLPDNYEIIDSSLEDITYVLKPTFTKQQIANLDKQAKLSRAYDGTTYLPGIVGLNNIKANDYANAVLQALSNVPPLRNYFLEEDNYKNIKRPPGDIMFLLVQRFGELMRKLWNPRNFKAHVSPHEMLQAVVLCSKKTFQITKQGDGVDFLSWFLNALHSALGGTKKKKKTIVTDVFQGSMRIFTKKLPHPDLPAEEKEQLLHNDEYQETMVESTFMYLTLDLPTAPLYKDEKEQLIIPQVPLFNILAKFNGITEKEYKTYKENFLKRFQLTKLPPYLIFCIKRFTKNNFFVEKNPTIVNFPITNVDLREYLSEEVQAVHENTTYDLIANIVHDGKPSEGSYRIHVLHHGTGKWYELQDLQVTDILPQMITLSEAYIQIWKRRDNDETNQQGA.

Basic and acidic residues-rich tracts occupy residues 1–21 and 28–39; these read MSGRSKRESRGSTRGKRESES and VKRERDREREPE. 2 disordered regions span residues 1–61 and 75–96; these read MSGR…SARE and EREVDEDSEPEREVRAKNGRVD. Residue S46 is modified to Phosphoserine. Residue K51 forms a Glycyl lysine isopeptide (Lys-Gly) (interchain with G-Cter in SUMO2) linkage. S82 bears the Phosphoserine mark. Positions 85–96 are enriched in basic and acidic residues; sequence EREVRAKNGRVD. A UBP-type; degenerate zinc finger spans residues 103 to 200; the sequence is RHCPYLDTIN…YVLKPTFTKQ (98 aa). 4 residues coordinate Zn(2+): C136, C139, H155, and H161. The region spanning 225 to 555 is the USP domain; the sequence is VGLNNIKAND…EAYIQIWKRR (331 aa).

It belongs to the peptidase C19 family. As to quaternary structure, the U4/U6-U5 tri-snRNP complex is a building block of the precatalytic spliceosome (spliceosome B complex). Component of the U4/U6-U5 tri-snRNP complex composed of the U4, U6 and U5 snRNAs and at least PRPF3, PRPF4, PRPF6, PRPF8, PRPF31, SNRNP200, TXNL4A, SNRNP40, SNRPB, SNRPD1, SNRPD2, SNRPD3, SNRPE, SNRPF, SNRPG, DDX23, CD2BP2, PPIH, SNU13, EFTUD2, SART1 and USP39, plus LSM2, LSM3, LSM4, LSM5, LSM6, LSM7 and LSM8.

It is found in the nucleus. The enzyme catalyses Thiol-dependent hydrolysis of ester, thioester, amide, peptide and isopeptide bonds formed by the C-terminal Gly of ubiquitin (a 76-residue protein attached to proteins as an intracellular targeting signal).. Deubiquitinating enzyme that plays a role in many cellular processes including cellular antiviral response, epithelial morphogenesis, DNA repair or B-cell development. Plays a role in pre-mRNA splicing as a component of the U4/U6-U5 tri-snRNP, one of the building blocks of the precatalytic spliceosome. Specifically regulates immunoglobulin gene rearrangement in a spliceosome-dependent manner, which involves modulating chromatin interactions at the Igh locus and therefore plays an essential role in B-cell development. Regulates AURKB mRNA levels, and thereby plays a role in cytokinesis and in the spindle checkpoint. Regulates apoptosis and G2/M cell cycle checkpoint in response to DNA damage by deubiquitinating and stabilizing CHK2. Also plays an important role in DNA repair by controlling the recruitment of XRCC4/LIG4 to DNA double-strand breaks for non-homologous end-joining repair. Participates in antiviral activity by affecting the type I IFN signaling by stabilizing STAT1 and decreasing its 'Lys-6'-linked ubiquitination. Contributes to non-canonical Wnt signaling during epidermal differentiation. Acts as a negative regulator NF-kappa-B activation through deubiquitination of 'Lys-48'-linked ubiquitination of NFKBIA. This is Ubiquitin carboxyl-terminal hydrolase 39 (USP39) from Pongo abelii (Sumatran orangutan).